The sequence spans 179 residues: Large ribosomal subunit protein uL6 (179 aa).

Belongs to the universal ribosomal protein uL6 family. As to quaternary structure, part of the 50S ribosomal subunit.

Its function is as follows. This protein binds to the 23S rRNA, and is important in its secondary structure. It is located near the subunit interface in the base of the L7/L12 stalk, and near the tRNA binding site of the peptidyltransferase center. This Synechococcus elongatus (strain ATCC 33912 / PCC 7942 / FACHB-805) (Anacystis nidulans R2) protein is Large ribosomal subunit protein uL6.